Reading from the N-terminus, the 301-residue chain is MHPCRRSLPFPLNCQLVKVGTADYGGASDQSDQQLDCALDLMRRLPPQQIEKNLSDLIDLVPSLCEDLLSSVDQPLKIARDKVVGKDYLLCDYNRDGDSYRSPWSNKYDPPLEDGAMPSARLRKLEVEANNAFDQYRDLYFEGGVSSVYLWDLDHGFAGVILIKKAGDGSKKIKGCWDSIHVVEVQEKSSGRTAHYKLTSTVMLWLQTNKSGSGTMNLGGSLTRQMEKDETVSDCSPHIANIGRLVEDMENKIRSTLNEIYFGKTKDIVNGLRSVQTFADKSKQEALKNDLVEALKRKQQC.

Ser-31 bears the Phosphoserine mark. Lys-264 carries the post-translational modification N6-acetyllysine.

The protein belongs to the F-actin-capping protein beta subunit family. In terms of assembly, component of the F-actin capping complex, composed of a heterodimer of an alpha and a beta subunit. Subunit of dynactin, a multiprotein complex part of a tripartite complex with dynein and a adapter, such as BICDL1, BICD2 or HOOK3. The dynactin complex is built around ACTR1A/ACTB filament and consists of an actin-related filament composed of a shoulder domain, a pointed end and a barbed end. Its length is defined by its flexible shoulder domain. The soulder is composed of 2 DCTN1 subunits, 4 DCTN2 and 2 DCTN3. The 4 DCNT2 (via N-terminus) bind the ACTR1A filament and act as molecular rulers to determine the length. The pointed end is important for binding dynein-dynactin cargo adapters. Consists of 4 subunits: ACTR10, DCNT4, DCTN5 and DCTN6. The barbed end is composed of a CAPZA1:CAPZB heterodimers, which binds ACTR1A/ACTB filament and dynactin and stabilizes dynactin. Interacts with ARHGAP17. Interaction with RCSD1/CAPZIP. Component of the WASH complex, composed of F-actin-capping protein subunit alpha (CAPZA1, CAPZA2 or CAPZA3), F-actin-capping protein subunit beta (CAPZB), WASH (WASHC1, WASH2P, WASH3P, WASH4P, WASH5P or WASH6P), WASHC2 (WASHC2A or WASHC2C), WASHC3, WASHC4 and WASHC5. Interacts with ACTG1. Directly interacts with CRACD; this interaction decreases binding to actin. In terms of tissue distribution, the isoform beta-3 is predominantly expressed in the testis. It is only detected in total sperm, sperm heads and the calyx fraction, but not in sperm tails or any supernatant fraction. Weaker expression also found in brain.

It is found in the cytoplasm. It localises to the cytoskeleton. The protein localises to the perinuclear theca. Its subcellular location is the calyx. Its function is as follows. F-actin-capping proteins bind in a Ca(2+)-independent manner to the fast growing ends of actin filaments (barbed end) thereby blocking the exchange of subunits at these ends. Unlike other capping proteins (such as gelsolin and severin), these proteins do not sever actin filaments. Plays a role in the regulation of cell morphology and cytoskeletal organization. Forms, with CAPZB, the barbed end of the fast growing ends of actin filaments in the dynactin complex and stabilizes dynactin structure. The dynactin multiprotein complex activates the molecular motor dynein for ultra-processive transport along microtubules. In Bos taurus (Bovine), this protein is F-actin-capping protein subunit beta (CAPZB).